Consider the following 138-residue polypeptide: MRTLWIMAVLLVGVEGSLVELGKMILQETGKNPLTSYGAYGCNCGVGGRGKPKDATDRCCYVHKCCYKKMTDCDPKKDRYSYSWKDKTIVCGEKNSCLKELCECDKAVAICLRENLDTYNKKYKNNYLKPFCKKADAC.

The N-terminal stretch at 1–16 (MRTLWIMAVLLVGVEG) is a signal peptide. Disulfide bonds link Cys-42–Cys-132, Cys-44–Cys-60, Cys-59–Cys-111, Cys-65–Cys-138, Cys-66–Cys-104, Cys-73–Cys-97, and Cys-91–Cys-102. The segment at 121–134 (KKYKNNYLKPFCKK) is important for membrane-damaging activities in eukaryotes and bacteria; heparin-binding.

Belongs to the phospholipase A2 family. Group II subfamily. K49 sub-subfamily. Homodimer; non-covalently linked (probable alternative/compact dimer conformation in solution). As to expression, expressed by the venom gland.

The protein resides in the secreted. In terms of biological role, snake venom phospholipase A2 homolog that lacks enzymatic and anticoagulant activities. In mice, it induces conspicuous local myonecrosis, edema, and a systemic interleukin-6 response. In vitro, it is cytolytic upon myoblasts, and weakly bactericidal. A model of myotoxic mechanism has been proposed: an apo Lys49-PLA2 is activated by the entrance of a hydrophobic molecule (e.g. fatty acid) at the hydrophobic channel of the protein leading to a reorientation of a monomer. This reorientation causes a transition between 'inactive' to 'active' states, causing alignment of C-terminal and membrane-docking sites (MDoS) side-by-side and putting the membrane-disruption sites (MDiS) in the same plane, exposed to solvent and in a symmetric position for both monomers. The MDoS region stabilizes the toxin on membrane by the interaction of charged residues with phospholipid head groups. Subsequently, the MDiS region destabilizes the membrane with penetration of hydrophobic residues. This insertion causes a disorganization of the membrane, allowing an uncontrolled influx of ions (i.e. calcium and sodium), and eventually triggering irreversible intracellular alterations and cell death. The sequence is that of Phospholipase A2 homolog 1 from Bothrops atrox (Barba amarilla).